Consider the following 203-residue polypeptide: MSSCVEKSRGRNPYAAVQVDPDSDYITPGTLDLEQLFWSGPTAQYAHVNQVWPRIYLGDEKTALERPALKDLGITHVLNAAVGKWNNVLTGADYYTGMNIRYLGVEADDKPTFNISQYFSQAAEFIHEALIHPVLVHCVMGRSRSATLVLAYLMIKEHLSVVDAVEHVRQRRCILPNHGFLKQLRALDIALQEEKLRLKRKDE.

One can recognise a Tyrosine-protein phosphatase domain in the interval 47-193 (HVNQVWPRIY…LRALDIALQE (147 aa)). Position 137 to 144 (137 to 144 (HCVMGRSR)) interacts with substrate. Cys138 (phosphocysteine intermediate) is an active-site residue.

The protein belongs to the protein-tyrosine phosphatase family. Non-receptor class dual specificity subfamily.

It localises to the cytoplasm. It is found in the nucleus. The catalysed reaction is O-phospho-L-tyrosyl-[protein] + H2O = L-tyrosyl-[protein] + phosphate. It catalyses the reaction O-phospho-L-seryl-[protein] + H2O = L-seryl-[protein] + phosphate. The enzyme catalyses O-phospho-L-threonyl-[protein] + H2O = L-threonyl-[protein] + phosphate. Functionally, dual specificity phosphatase able to dephosphorylate phosphotyrosine, phosphoserine and phosphothreonine residues within the same substrate, with a preference for phosphotyrosine as a substrate. Involved in the modulation of AMPK and MAPK1/2 signaling pathways. This chain is Dual specificity phosphatase 29 (dusp29), found in Oryzias latipes (Japanese rice fish).